A 333-amino-acid chain; its full sequence is Glycerol-3-phosphate dehydrogenase [NAD(P)+] (333 aa).

Residues serine 10, tryptophan 11, and lysine 105 each contribute to the NADPH site. 3 residues coordinate sn-glycerol 3-phosphate: lysine 105, glycine 136, and threonine 138. Position 140 (alanine 140) interacts with NADPH. Residues lysine 191, aspartate 244, serine 254, arginine 255, and asparagine 256 each contribute to the sn-glycerol 3-phosphate site. The active-site Proton acceptor is the lysine 191. NADPH is bound at residue arginine 255. Residues valine 279 and glutamate 281 each contribute to the NADPH site.

This sequence belongs to the NAD-dependent glycerol-3-phosphate dehydrogenase family.

Its subcellular location is the cytoplasm. It catalyses the reaction sn-glycerol 3-phosphate + NAD(+) = dihydroxyacetone phosphate + NADH + H(+). The enzyme catalyses sn-glycerol 3-phosphate + NADP(+) = dihydroxyacetone phosphate + NADPH + H(+). The protein operates within membrane lipid metabolism; glycerophospholipid metabolism. In terms of biological role, catalyzes the reduction of the glycolytic intermediate dihydroxyacetone phosphate (DHAP) to sn-glycerol 3-phosphate (G3P), the key precursor for phospholipid synthesis. The sequence is that of Glycerol-3-phosphate dehydrogenase [NAD(P)+] from Syntrophotalea carbinolica (strain DSM 2380 / NBRC 103641 / GraBd1) (Pelobacter carbinolicus).